The following is a 645-amino-acid chain: Cilia- and flagella-associated protein 221 homolog (645 aa).

The tract at residues glycine 381–proline 408 is disordered. The tract at residues threonine 428–arginine 435 is interaction with calmodulin.

This sequence belongs to the PCDP1 family. Interacts with calmodulin; calcium-dependent. Part of the PDCP1 complex composed of CFAP46, CFAP54, CFAP74 and CFAP221; the PDCP1 complex binds calmodulin.

The protein localises to the cytoplasm. It localises to the cytoskeleton. It is found in the cilium axoneme. In terms of biological role, may play a role in cilium morphogenesis. The chain is Cilia- and flagella-associated protein 221 homolog from Chlamydomonas reinhardtii (Chlamydomonas smithii).